The sequence spans 503 residues: Maturase K (503 aa).

Belongs to the intron maturase 2 family. MatK subfamily.

Its subcellular location is the plastid. The protein localises to the chloroplast. Usually encoded in the trnK tRNA gene intron. Probably assists in splicing its own and other chloroplast group II introns. This is Maturase K from Eucalyptus globulus (Tasmanian blue gum).